The sequence spans 783 residues: ATP-dependent DNA helicase Hel308 (783 aa).

Residues Q29 and 47 to 54 contribute to the ATP site; that span reads VPTASGKT. The 176-residue stretch at 34–209 folds into the Helicase ATP-binding domain; that stretch reads ERGVTEGANL…WLDAELVDSD (176 aa). The DEAH box motif lies at 154–157; it reads DEVH. The Helicase C-terminal domain maps to 242-443; that stretch reads QTAAVVADTL…EPALRTHVLA (202 aa). The tract at residues 744 to 783 is disordered; sequence ETVGHPDPGMDGVAADTDAAPESGGEAGGDEGQASLGDFS.

Belongs to the helicase family. Hel308 subfamily. In terms of assembly, monomer.

It catalyses the reaction Couples ATP hydrolysis with the unwinding of duplex DNA by translocating in the 3'-5' direction.. The catalysed reaction is ATP + H2O = ADP + phosphate + H(+). Functionally, DNA-dependent ATPase and 3'-5' DNA helicase that may be involved in repair of stalled replication forks. This chain is ATP-dependent DNA helicase Hel308, found in Halobacterium salinarum (strain ATCC 700922 / JCM 11081 / NRC-1) (Halobacterium halobium).